The primary structure comprises 391 residues: Small ribosomal subunit protein bS1 (391 aa).

S1 motif domains are found at residues 16–90 (GDKV…LSRR), 108–173 (NEII…LSRK), 194–262 (GDVI…LSIK), and 279–348 (NDVI…LSIK).

Belongs to the bacterial ribosomal protein bS1 family.

Its function is as follows. Binds mRNA; thus facilitating recognition of the initiation point. It is needed to translate mRNA with a short Shine-Dalgarno (SD) purine-rich sequence. The protein is Small ribosomal subunit protein bS1 (rpsA) of Staphylococcus aureus (strain MSSA476).